A 237-amino-acid polypeptide reads, in one-letter code: Germination-specific N-acetylmuramoyl-L-alanine amidase (237 aa).

An N-terminal signal peptide occupies residues 1–27; sequence MRKKLKWLSFLLGFIILLFLFKYQFSN. In terms of domain architecture, MurNAc-LAA spans 43–226; sequence IYLDPGHGGP…VASSIYKGIL (184 aa).

It belongs to the N-acetylmuramoyl-L-alanine amidase 3 family.

Its subcellular location is the secreted. It catalyses the reaction Hydrolyzes the link between N-acetylmuramoyl residues and L-amino acid residues in certain cell-wall glycopeptides.. Its function is as follows. Cleaves the peptide side chain from the N-acetylmuramic acid residues in peptidoglycan. This is a step in the formation of muramic delta-lactam residues in spore cortex. In Bacillus subtilis (strain 168), this protein is Germination-specific N-acetylmuramoyl-L-alanine amidase (cwlD).